A 432-amino-acid chain; its full sequence is RNA binding protein fox-1 homolog 2 (432 aa).

Residues 1–21 are compositionally biased toward low complexity; the sequence is MAEGGQAQQQPPQLGPGAAAR. The tract at residues 1–169 is disordered; that stretch reads MAEGGQAQQQ…STPKRLHVSN (169 aa). Polar residues-rich tracts occupy residues 60–69 and 101–121; these read QGNQEPTTTP and YAGQTSEHNLTLYGSSQPHGE. The span at 122-159 shows a compositional bias: low complexity; that stretch reads QSSNSPSNQNGSLTQTEGGAQTDGQQSQTQSSENSESK. The RRM domain occupies 163 to 239; that stretch reads KRLHVSNIPF…RKIEVNNATA (77 aa). Arg323 bears the Omega-N-methylarginine mark. Residues Arg339 and Arg371 each carry the asymmetric dimethylarginine modification. 2 positions are modified to asymmetric dimethylarginine; alternate: Arg423 and Arg428. Arg423 and Arg428 each carry omega-N-methylarginine; alternate.

As to quaternary structure, interacts with ER-alpha N-terminal activation domain. Interacts with RBPMS; the interaction allows cooperative assembly of stable cell-specific alternative splicing regulatory complexes.

Its subcellular location is the nucleus. It is found in the cytoplasm. RNA-binding protein that regulates alternative splicing events by binding to 5'-UGCAUGU-3' elements. Prevents binding of U2AF2 to the 3'-splice site. Regulates alternative splicing of tissue-specific exons and of differentially spliced exons during erythropoiesis. Seems to act as a coregulatory factor of ER-alpha. Together with RNA binding proteins RBPMS and MBNL1/2, activates vascular smooth muscle cells alternative splicing events. In Rattus norvegicus (Rat), this protein is RNA binding protein fox-1 homolog 2 (Rbfox2).